A 290-amino-acid polypeptide reads, in one-letter code: 33 kDa chaperonin (290 aa).

2 disulfides stabilise this stretch: Cys235–Cys237 and Cys268–Cys271.

The protein belongs to the HSP33 family. In terms of processing, under oxidizing conditions two disulfide bonds are formed involving the reactive cysteines. Under reducing conditions zinc is bound to the reactive cysteines and the protein is inactive.

Its subcellular location is the cytoplasm. Functionally, redox regulated molecular chaperone. Protects both thermally unfolding and oxidatively damaged proteins from irreversible aggregation. Plays an important role in the bacterial defense system toward oxidative stress. The polypeptide is 33 kDa chaperonin (Streptococcus mutans serotype c (strain ATCC 700610 / UA159)).